A 643-amino-acid chain; its full sequence is Translation factor GUF1, mitochondrial (643 aa).

A mitochondrion-targeting transit peptide spans 1–18 (MLASQAIKRIFHRSWKPL). A tr-type G domain is found at 43–226 (ENYRNFSIVA…AIIDRIPPPT (184 aa)). GTP contacts are provided by residues 52–59 (AHIDHGKS), 118–122 (DTPGH), and 172–175 (NKID).

It belongs to the TRAFAC class translation factor GTPase superfamily. Classic translation factor GTPase family. LepA subfamily.

The protein resides in the mitochondrion inner membrane. The catalysed reaction is GTP + H2O = GDP + phosphate + H(+). In terms of biological role, promotes mitochondrial protein synthesis. May act as a fidelity factor of the translation reaction, by catalyzing a one-codon backward translocation of tRNAs on improperly translocated ribosomes. Binds to mitochondrial ribosomes in a GTP-dependent manner. The sequence is that of Translation factor GUF1, mitochondrial from Zygosaccharomyces rouxii (strain ATCC 2623 / CBS 732 / NBRC 1130 / NCYC 568 / NRRL Y-229).